The following is a 254-amino-acid chain: Phosphoribosylaminoimidazole-succinocarboxamide synthase (254 aa).

The protein belongs to the SAICAR synthetase family.

It carries out the reaction 5-amino-1-(5-phospho-D-ribosyl)imidazole-4-carboxylate + L-aspartate + ATP = (2S)-2-[5-amino-1-(5-phospho-beta-D-ribosyl)imidazole-4-carboxamido]succinate + ADP + phosphate + 2 H(+). Its pathway is purine metabolism; IMP biosynthesis via de novo pathway; 5-amino-1-(5-phospho-D-ribosyl)imidazole-4-carboxamide from 5-amino-1-(5-phospho-D-ribosyl)imidazole-4-carboxylate: step 1/2. In Bartonella henselae (strain ATCC 49882 / DSM 28221 / CCUG 30454 / Houston 1) (Rochalimaea henselae), this protein is Phosphoribosylaminoimidazole-succinocarboxamide synthase.